A 1809-amino-acid polypeptide reads, in one-letter code: Proprotein convertase subtilisin/kexin type 5 (1809 aa).

The first 34 residues, 1–34, serve as a signal peptide directing secretion; sequence MDWGWGSRCCRPGRRDLLCVLALLAGCLLPVCRT. A propeptide spanning residues 35-116 is cleaved from the precursor; that stretch reads RVYTNHWAVK…QQVVKKRTKR (82 aa). The Extracellular segment spans residues 117–1700; that stretch reads DYDLSRAQST…DTVFHEHTKT (1584 aa). Residues 136–455 form the Peptidase S8 domain; the sequence is MWYMHCSDNT…FGLMDAEAMV (320 aa). Catalysis depends on charge relay system residues aspartate 173 and histidine 214. Asparagine 227 and asparagine 383 each carry an N-linked (GlcNAc...) asparagine glycan. Serine 388 serves as the catalytic Charge relay system. Positions 463-603 constitute a P/Homo B domain; the sequence is TVPQQHVCVE…SLVLYGTSVQ (141 aa). A Cell attachment site motif is present at residues 521 to 523; that stretch reads RGD. FU repeat units lie at residues 632–682, 685–732, 736–779, 781–826, 834–881, 884–929, 931–964, 965–1010, 1012–1054, 1058–1099, 1137–1179, 1183–1230, 1232–1276, 1278–1321, 1323–1369, 1373–1418, 1422–1467, 1471–1516, 1520–1567, 1571–1616, and 1622–1669; these read EDYA…GHFH, KKRC…GSYQ, KNIC…GQFF, GHDC…SYYL, YKSC…GEYI, QGHC…WKFE, KKQCHPCHHTCQGCQGSGPSNCTSCKAGEFQDSE, YGEC…KTFG, KWEC…GFYG, LGEC…PTWP, TRQY…GTWL, SSSC…GFYA, DGVC…KHVA, EGVC…NFYP, MRQC…GTYK, NDEC…IEYW, SHRC…GYHT, SHQC…GYYG, SGRC…HYYA, AQTC…GEYR, and NFNC…SHPH. The CRM (Cys-rich motif) stretch occupies residues 638–1685; sequence CDPECSEVGC…DCQSSTDECI (1048 aa). N-linked (GlcNAc...) asparagine glycosylation is present at asparagine 667. 3 N-linked (GlcNAc...) asparagine glycosylation sites follow: asparagine 754, asparagine 804, and asparagine 854. N-linked (GlcNAc...) asparagine glycans are attached at residues asparagine 1642 and asparagine 1664. A helical membrane pass occupies residues 1701–1721; sequence ALLVTSGAMLLLLLGAAVVVW. Residues 1722-1809 are Cytoplasmic-facing; the sequence is RKSRSQPVAK…EYDDESYSYQ (88 aa). AC stretches follow at residues 1757 to 1776 and 1788 to 1809; these read VIEYRDRDYDEDDEDDIVYM and YGLLDEAEDDELEYDDESYSYQ.

Belongs to the peptidase S8 family. Expressed in the intestine, brain, adrenal gland, anterior pituitary, thyroid, ovaries, testis and lung. Highest levels are found in the gut, duodenum, jejunum and ileum. Expression is higher in female than in male reproductive organs.

The protein localises to the secreted. The protein resides in the endomembrane system. In terms of biological role, serine endoprotease that processes various proproteins by cleavage at paired basic amino acids, recognizing the RXXX[KR]R consensus motif. Likely functions in the constitutive and regulated secretory pathways. Plays an essential role in pregnancy establishment by proteolytic activation of a number of important factors such as BMP2, CALD1 and alpha-integrins. May be responsible for the maturation of gastrointestinal peptides. May be involved in the cellular proliferation of adrenal cortex via the activation of growth factors. In Rattus norvegicus (Rat), this protein is Proprotein convertase subtilisin/kexin type 5 (Pcsk5).